Here is a 215-residue protein sequence, read N- to C-terminus: Small ribosomal subunit protein uS3 (215 aa).

The KH type-2 domain maps to Leu38–Arg106.

The protein belongs to the universal ribosomal protein uS3 family. As to quaternary structure, part of the 30S ribosomal subunit. Forms a tight complex with proteins S10 and S14.

Its function is as follows. Binds the lower part of the 30S subunit head. Binds mRNA in the 70S ribosome, positioning it for translation. The chain is Small ribosomal subunit protein uS3 from Desulforapulum autotrophicum (strain ATCC 43914 / DSM 3382 / VKM B-1955 / HRM2) (Desulfobacterium autotrophicum).